The chain runs to 167 residues: MLSKDIIKLLNEQVNKEMNSSNLYMSMSSWCYTHSLDGAGLFLFDHAAEEYEHAKKLIVFLNENNVPVQLTSISAPEHKFEGLTQIFQKAYEHEQHISESINNIVDHAIKGKDHATFNFLQWYVSEQHEEEVLFKDILDKIELIGNENHGLYLADQYVKGIAKSRKS.

One can recognise a Ferritin-like diiron domain in the interval 1 to 145 (MLSKDIIKLL…DILDKIELIG (145 aa)). Fe cation-binding residues include Glu17, Glu50, His53, Glu94, and Gln127.

The protein belongs to the ferritin family. Prokaryotic subfamily. In terms of assembly, homooligomer of 24 subunits that assemble into a spherical protein shell (12 +/- 1 nM diameter) that can sequester at least 2000 iron atoms.

It localises to the cytoplasm. The enzyme catalyses 4 Fe(2+) + O2 + 6 H2O = 4 iron(III) oxide-hydroxide + 12 H(+). Functionally, iron-storage protein. This Helicobacter pylori (strain ATCC 700392 / 26695) (Campylobacter pylori) protein is Bacterial non-heme ferritin (ftnA).